A 353-amino-acid polypeptide reads, in one-letter code: uncharacterized protein (353 aa).

A disordered region spans residues 69 to 106 (ISSATPSSTPPATRASSRLQPPKGHQAGGSNSQQQQPS). A compositionally biased stretch (low complexity) spans 70-86 (SSATPSSTPPATRASSR). Residues 319 to 353 (GENKEKKMREMSRVYREMTRQMDDTRRDLDRLNQG) adopt a coiled-coil conformation.

This is an uncharacterized protein from Gibberella zeae (strain ATCC MYA-4620 / CBS 123657 / FGSC 9075 / NRRL 31084 / PH-1) (Wheat head blight fungus).